A 138-amino-acid polypeptide reads, in one-letter code: Ferredoxin-2 (138 aa).

One can recognise a 2Fe-2S ferredoxin-type domain in the interval 27 to 117; the sequence is ADANLQSTDF…DAKIVYNLKH (91 aa). Positions 62, 67, 70, and 100 each coordinate [2Fe-2S] cluster.

This sequence belongs to the 2Fe2S plant-type ferredoxin family. Requires [2Fe-2S] cluster as cofactor.

Ferredoxins are iron-sulfur proteins that transfer electrons in a wide variety of metabolic reactions. The protein is Ferredoxin-2 (fer2) of Haloarcula marismortui (strain ATCC 43049 / DSM 3752 / JCM 8966 / VKM B-1809) (Halobacterium marismortui).